Reading from the N-terminus, the 504-residue chain is MXXXXGYLEFDGARQQSFLYPLFFREYIYVLAYDHGLNRLNRNRSIFLENADYDKKYSSLIVKRLILRMYEQNRLIIPTKDLNQNNFLGHTSLFYYQMISVLFAVIVEIPFSLRLGSSFEGKQFKKSYNLQSIHSIFPFLEDKLSHFNYVLDVLIPYPIHLEILVQTLRYRVKDASSLHFFRFCLYEYCNWKNFYIKKKAILNPRFLLFLYNSHICEYESIFFFLRKRSSHLRSTSYEVLFERILFYVKIQHFLKVFVNNFPAILGLLKDPFIHYVRYHGRCILATKDTPLLMNKWKYYFVNLWQCYFSVWFQSQKVNINQLSKDNLEFLGYLSSLRLNPLVVRSQMLENSFLLDNVRIKLDTKIPISSIIRSLAKDKFCTVLGHPISKATWTDSSDSDILNRFVRICRNISHYYSGSSKKKNLYRIKYILRLCCVKTLARKHKSTVRAFLKRLGSGLLEEFLTGEDQILSLIFPRSYYAYKKLYRVRIWYLDILYLNDLVNHE.

Belongs to the intron maturase 2 family. MatK subfamily.

Its subcellular location is the plastid. It is found in the chloroplast. In terms of biological role, usually encoded in the trnK tRNA gene intron. Probably assists in splicing its own and other chloroplast group II introns. In Lepidium campestre (Field pepperwort), this protein is Maturase K.